A 397-amino-acid chain; its full sequence is Elongation factor Tu (397 aa).

A tr-type G domain is found at 10 to 206 (KPHVNIGTIG…AVDDNVPEPE (197 aa)). Positions 19–26 (GHVDHGKT) are G1. Residue 19–26 (GHVDHGKT) coordinates GTP. T26 is a Mg(2+) binding site. The segment at 62–66 (GITIN) is G2. The interval 83-86 (DAPG) is G3. GTP contacts are provided by residues 83 to 87 (DAPGH) and 138 to 141 (NKSD). The segment at 138-141 (NKSD) is G4. The interval 176 to 178 (SAL) is G5.

It belongs to the TRAFAC class translation factor GTPase superfamily. Classic translation factor GTPase family. EF-Tu/EF-1A subfamily. In terms of assembly, monomer.

The protein localises to the cytoplasm. The enzyme catalyses GTP + H2O = GDP + phosphate + H(+). In terms of biological role, GTP hydrolase that promotes the GTP-dependent binding of aminoacyl-tRNA to the A-site of ribosomes during protein biosynthesis. In Brevibacterium linens, this protein is Elongation factor Tu.